We begin with the raw amino-acid sequence, 487 residues long: N-succinylglutamate 5-semialdehyde dehydrogenase (487 aa).

Position 221-226 (221-226 (GSSDTG)) interacts with NAD(+). Active-site residues include Glu-244 and Cys-278.

The protein belongs to the aldehyde dehydrogenase family. AstD subfamily.

The enzyme catalyses N-succinyl-L-glutamate 5-semialdehyde + NAD(+) + H2O = N-succinyl-L-glutamate + NADH + 2 H(+). It functions in the pathway amino-acid degradation; L-arginine degradation via AST pathway; L-glutamate and succinate from L-arginine: step 4/5. In terms of biological role, catalyzes the NAD-dependent reduction of succinylglutamate semialdehyde into succinylglutamate. In Burkholderia multivorans (strain ATCC 17616 / 249), this protein is N-succinylglutamate 5-semialdehyde dehydrogenase.